The chain runs to 86 residues: UPF0297 protein STH1998 (86 aa).

It belongs to the UPF0297 family.

This chain is UPF0297 protein STH1998, found in Symbiobacterium thermophilum (strain DSM 24528 / JCM 14929 / IAM 14863 / T).